Consider the following 119-residue polypeptide: Succinate dehydrogenase assembly factor 2, mitochondrial (119 aa).

It belongs to the SDHAF2 family. In terms of assembly, interacts with the flavoprotein subunit within the SDH catalytic dimer.

The protein localises to the mitochondrion matrix. Functionally, plays an essential role in the assembly of succinate dehydrogenase (SDH), an enzyme complex (also referred to as respiratory complex II) that is a component of both the tricarboxylic acid (TCA) cycle and the mitochondrial electron transport chain, and which couples the oxidation of succinate to fumarate with the reduction of ubiquinone (coenzyme Q) to ubiquinol. Required for flavinylation (covalent attachment of FAD) of the flavoprotein subunit of the SDH catalytic dimer. The polypeptide is Succinate dehydrogenase assembly factor 2, mitochondrial (Caenorhabditis elegans).